The chain runs to 1252 residues: Plasma membrane calcium-transporting ATPase mca-1 (1252 aa).

Topologically, residues 1–121 are cytoplasmic; the sequence is MQKSQNVTAV…VRLVLDACKD (121 aa). The helical transmembrane segment at 122-142 threads the bilayer; that stretch reads PTLVILVLSGFINLALSFYEP. Topologically, residues 143–180 are extracellular; the sequence is TSAAEDATQHLVNATTAAILANGTFMSTTEAPSEGHGT. Residues Asn155 and Asn164 are each glycosylated (N-linked (GlcNAc...) asparagine). A helical membrane pass occupies residues 181 to 201; it reads AWIEGVAILLCVIVVVLVTAV. The Cytoplasmic portion of the chain corresponds to 202-376; that stretch reads NDYSKERQFR…KSVLQAKLSK (175 aa). The segment at 330 to 361 is disordered; the sequence is DDSTSTSSSSSSSSSSSGSSSNGSSDSSKSGD. A compositionally biased stretch (low complexity) spans 333-357; it reads TSTSSSSSSSSSSSGSSSNGSSDSS. Residues 377-397 traverse the membrane as a helical segment; it reads LALQIIYCGTTIAIIALIVLV. Topologically, residues 398 to 422 are extracellular; that stretch reads TRFCLDHYVFEKNEFSLVDIQMFVK. The helical transmembrane segment at 423 to 443 threads the bilayer; it reads FFIIAVTILVISIPEGLPLAI. Val432, Ile435, and Glu437 together coordinate Ca(2+). Residues 444 to 879 are Cytoplasmic-facing; the sequence is ALALTYSVRK…GRNVYDSISK (436 aa). The 4-aspartylphosphate intermediate role is filled by Asp479. 2 residues coordinate Mg(2+): Asp479 and Thr481. 8 residues coordinate ATP: Thr481, Glu553, Lys612, Thr733, Gly734, Asp735, Arg792, and Lys798. Asp822 contributes to the Mg(2+) binding site. An ATP-binding site is contributed by Asn825. A helical transmembrane segment spans residues 880 to 900; the sequence is FLQFQLTVNVVAVITAFVGAV. Asn888 provides a ligand contact to Ca(2+). The Extracellular segment spans residues 901–908; that stretch reads TVSDSPLK. A helical transmembrane segment spans residues 909–929; it reads AVHMLWINLIMDTLASLALAT. Ca(2+)-binding residues include Asn916 and Asp920. Topologically, residues 930-960 are cytoplasmic; it reads EQPTDELLERKPYGRKKSLISRTMVKNILCH. The helical transmembrane segment at 961-981 threads the bilayer; sequence ALYQLIIIFVIFFYGDTIFGI. The Extracellular portion of the chain corresponds to 982 to 989; that stretch reads KTGLYAPL. The chain crosses the membrane as a helical span at residues 990–1010; sequence FAPPSQHFTLVFNAFVMMTVF. Over 1011–1035 the chain is Cytoplasmic; the sequence is NEINARKVHGERNVFKGLASNRVFC. The helical transmembrane segment at 1036–1056 threads the bilayer; the sequence is VIWVTTFIAQIIIVQFGGAWF. At 1057-1065 the chain is on the extracellular side; that stretch reads STAPLTLQQ. Residues 1066–1086 form a helical membrane-spanning segment; that stretch reads WIVCLVLGFSTLIWGQIVATI. The Cytoplasmic portion of the chain corresponds to 1087-1252; sequence PSKKLPKAWK…NVDMEDIELN (166 aa). The interval 1124 to 1142 is calmodulin-binding subdomain A; that stretch reads LRRSGKSLWVRGMFIIGNH. The calmodulin-binding subdomain B stretch occupies residues 1143–1152; that stretch reads LRVLRAFGME. The interval 1181–1252 is disordered; sequence YRHQKHQEKK…NVDMEDIELN (72 aa).

The protein belongs to the cation transport ATPase (P-type) (TC 3.A.3) family. Type IIB subfamily. Interacts with calmodulin.

It localises to the cell membrane. It carries out the reaction Ca(2+)(in) + ATP + H2O = Ca(2+)(out) + ADP + phosphate + H(+). Its function is as follows. Catalyzes the hydrolysis of ATP coupled with the transport of calcium across a membrane. This Caenorhabditis elegans protein is Plasma membrane calcium-transporting ATPase mca-1.